Consider the following 433-residue polypeptide: MFRWLNINKCMSKIIHPYVLKPNNCIHTNWLFKFATLKNENKIFPKKNLNNNILMQNIKVADDGNAICEQLLFSKYDLPYLLKIPVSDLRLIDTGNNNHNPTILIRKDVILLRTGFISCIIRYNETWLFEGSNSVVINAKDLISKNLKKQNNNKFKNCNNDEIVESLCRKRNCTDNGKENMKQINNDEKEELNYLNIINNFYRYNKGKAYFEFLCLDICMQLSIKEYENDLEGINYKIRDIILLQRKEENNELNMLTNKLLRDMMKIKNNLQKLSNLLNALRTNIEKILNNENDMKNMYLTYLNKNPYNNLKDCSDLEILLETHLQLTDELYGQLENVEEKITHYEELMRLNLDYNRNKFILLNAKISFSTLLFSISSVVTSLFGMNLKNFVEDSNYAFIIVSIFVSVWSIIGIYVTKNINTLLKFFDRYNFR.

Residues 257–298 are a coiled coil; the sequence is TNKLLRDMMKIKNNLQKLSNLLNALRTNIEKILNNENDMKNM. Residues 360–380 traverse the membrane as a helical segment; that stretch reads FILLNAKISFSTLLFSISSVV. The Extracellular segment spans residues 381–396; sequence TSLFGMNLKNFVEDSN. Residues 397–417 form a helical membrane-spanning segment; sequence YAFIIVSIFVSVWSIIGIYVT. The Mitochondrial matrix portion of the chain corresponds to 418–433; sequence KNINTLLKFFDRYNFR.

This sequence belongs to the CorA metal ion transporter (MIT) (TC 1.A.35) family.

It localises to the mitochondrion inner membrane. In terms of biological role, mitochondrial inner membrane magnesium transporter required for mitochondrial magnesium homeostasis. Involved in the development of the sporozoite in the mosquito vector midgut. This is Mitochondrial inner membrane magnesium transporter MIT1 from Plasmodium berghei (strain Anka).